Reading from the N-terminus, the 119-residue chain is Putative nitrilase-like protein YIL165C (119 aa).

One can recognise a CN hydrolase domain in the interval M1–T82. Catalysis depends on D21, which acts as the Proton acceptor.

Belongs to the carbon-nitrogen hydrolase superfamily. Nitrilase family.

The chain is Putative nitrilase-like protein YIL165C from Saccharomyces cerevisiae (strain ATCC 204508 / S288c) (Baker's yeast).